Reading from the N-terminus, the 422-residue chain is MAEQLALVIGCIIGGLLLLIGISCCLWKRLCTTFTYEELPETADTATSSSFSKKEERPCRYAGIPSVRLPSVPFVVPPSHQGRDWVRLHGGDWAVAPQDPCPVPEHITCTSSPAAGQTSLPLCVMGSINPELYKSSEDVSEAGFPDGCLGRLWFSVEYQQESERLLVDLIKAQHLQVPAETCSTLVKLHLLPDKRRFLQSKAKRKTCNPQFDESFIFQVSSKSVAQRVLKFSVYHINKQRKHQLLGQVLFPLKNETLAGDRHRVIWRDLEAENLEPLSEFGDLQFCLSYNDYLSRLTVVVLRAKGLQLQEDRGVVSVFVKVSLMNHNKFVKCKRTSAVLGSVNPVYNETFSFKADANELDTASLSLVVLQITEGDKSYPLGRVVVGPYMYTRGKELEHWNEMLRKPKELVKRWHALCRPMEP.

The Extracellular segment spans residues M1–Q4. Residues L5–W27 traverse the membrane as a helical; Signal-anchor for type III membrane protein segment. Over K28–P422 the chain is Cytoplasmic. 2 consecutive C2 domains span residues C148–R267 and E279–N400.

It belongs to the synaptotagmin family. As to quaternary structure, homodimer.

Its subcellular location is the membrane. In terms of biological role, may be involved in the trafficking and exocytosis of secretory vesicles in non-neuronal tissues. The sequence is that of Synaptotagmin-15 (Syt15) from Rattus norvegicus (Rat).